The following is a 272-amino-acid chain: Putative pyruvate, phosphate dikinase regulatory protein (272 aa).

Position 154–161 (154–161 (GVSRTSKS)) interacts with ADP.

This sequence belongs to the pyruvate, phosphate/water dikinase regulatory protein family. PDRP subfamily.

The catalysed reaction is N(tele)-phospho-L-histidyl/L-threonyl-[pyruvate, phosphate dikinase] + ADP = N(tele)-phospho-L-histidyl/O-phospho-L-threonyl-[pyruvate, phosphate dikinase] + AMP + H(+). It catalyses the reaction N(tele)-phospho-L-histidyl/O-phospho-L-threonyl-[pyruvate, phosphate dikinase] + phosphate + H(+) = N(tele)-phospho-L-histidyl/L-threonyl-[pyruvate, phosphate dikinase] + diphosphate. In terms of biological role, bifunctional serine/threonine kinase and phosphorylase involved in the regulation of the pyruvate, phosphate dikinase (PPDK) by catalyzing its phosphorylation/dephosphorylation. The protein is Putative pyruvate, phosphate dikinase regulatory protein of Wolbachia sp. subsp. Brugia malayi (strain TRS).